Reading from the N-terminus, the 46-residue chain is Toxin Up-1 (46 aa).

It is found in the secreted. It localises to the nematocyst. The protein localises to the target cell membrane. This toxin is a potent hemolysin devoid of enzymatic activity. Its hemolytic activity is inhibited by sphingomyelin but not by cholesterol. In erythrocyte membranes, it causes numerous cell membrane ruptures. It also exerces cytotoxicity to different cell lines. It exerces a positive inotropic effect. Also causes hemorrhage and necrosis by dilation of the blood vessels in the skin, and vascular leakage of fluids and rupture of alveolar walls of the lungs. Is a potent ichtyotoxin. May act as a pore-forming toxin. The chain is Toxin Up-1 from Urticina piscivora (Fish-eating sea anemone).